A 230-amino-acid chain; its full sequence is RNA chaperone ProQ (230 aa).

The disordered stretch occupies residues 104 to 176 (AEAKARVQAQ…APRQNTEKLT (73 aa)). Basic and acidic residues predominate over residues 115-132 (AEQRAKKREAEGDKETSK).

It belongs to the ProQ family.

It localises to the cytoplasm. Functionally, RNA chaperone with significant RNA binding, RNA strand exchange and RNA duplexing activities. May regulate ProP activity through an RNA-based, post-transcriptional mechanism. The polypeptide is RNA chaperone ProQ (Proteus mirabilis (strain HI4320)).